The sequence spans 1130 residues: DNA-directed RNA polymerase I subunit rpa2 (1130 aa).

A C4-type zinc finger spans residues 1070–1096 (CKLCGSTLTIYSKKDYSNQTVSECKSC).

Belongs to the RNA polymerase beta chain family. In terms of assembly, component of the RNA polymerase I (Pol I) complex consisting of 14 subunits.

Its subcellular location is the nucleus. The protein resides in the nucleolus. It carries out the reaction RNA(n) + a ribonucleoside 5'-triphosphate = RNA(n+1) + diphosphate. DNA-dependent RNA polymerase catalyzes the transcription of DNA into RNA using the four ribonucleoside triphosphates as substrates. Second largest core component of RNA polymerase I which synthesizes ribosomal RNA precursors. Proposed to contribute to the polymerase catalytic activity and forms the polymerase active center together with the largest subunit. Pol I is composed of mobile elements and RPA2 is part of the core element with the central large cleft and probably a clamp element that moves to open and close the cleft. The chain is DNA-directed RNA polymerase I subunit rpa2 (polr1b) from Dictyostelium discoideum (Social amoeba).